A 441-amino-acid chain; its full sequence is Tubulin beta chain, nucleomorph (441 aa).

8 residues coordinate GTP: Q11, E69, S138, G142, T143, G144, N204, and N226. Residue E69 participates in Mg(2+) binding.

Belongs to the tubulin family. In terms of assembly, dimer of alpha and beta chains. A typical microtubule is a hollow water-filled tube with an outer diameter of 25 nm and an inner diameter of 15 nM. Alpha-beta heterodimers associate head-to-tail to form protofilaments running lengthwise along the microtubule wall with the beta-tubulin subunit facing the microtubule plus end conferring a structural polarity. Microtubules usually have 13 protofilaments but different protofilament numbers can be found in some organisms and specialized cells. Mg(2+) is required as a cofactor.

Its function is as follows. Tubulin is the major constituent of microtubules, a cylinder consisting of laterally associated linear protofilaments composed of alpha- and beta-tubulin heterodimers. Microtubules grow by the addition of GTP-tubulin dimers to the microtubule end, where a stabilizing cap forms. Below the cap, tubulin dimers are in GDP-bound state, owing to GTPase activity of alpha-tubulin. The sequence is that of Tubulin beta chain, nucleomorph (tubB) from Guillardia theta (Cryptophyte).